Consider the following 341-residue polypeptide: uncharacterized protein (341 aa).

This is an uncharacterized protein from Mycobacterium bovis (strain ATCC BAA-935 / AF2122/97).